Here is a 196-residue protein sequence, read N- to C-terminus: Imidazoleglycerol-phosphate dehydratase (196 aa).

The protein belongs to the imidazoleglycerol-phosphate dehydratase family.

It localises to the cytoplasm. The catalysed reaction is D-erythro-1-(imidazol-4-yl)glycerol 3-phosphate = 3-(imidazol-4-yl)-2-oxopropyl phosphate + H2O. Its pathway is amino-acid biosynthesis; L-histidine biosynthesis; L-histidine from 5-phospho-alpha-D-ribose 1-diphosphate: step 6/9. This chain is Imidazoleglycerol-phosphate dehydratase, found in Desulfitobacterium hafniense (strain Y51).